The sequence spans 233 residues: uncharacterized protein (233 aa).

An N-terminal signal peptide occupies residues 1 to 23 (MEIKYFLVLLVGFLLVLPSIVNP). The segment at 42 to 217 (LDVNNPHNPN…HHHHQEASEC (176 aa)) is disordered. Residues 45-64 (NNPHNPNNNPHNPHNPNNNP) are compositionally biased toward low complexity. A compositionally biased stretch (basic residues) spans 65 to 211 (HHPHHLHHHH…HPHPHHHHHH (147 aa)).

Its subcellular location is the secreted. This is an uncharacterized protein from Dictyostelium discoideum (Social amoeba).